The following is a 91-amino-acid chain: UPF0512 protein M (91 aa).

This sequence belongs to the UPF0512 family.

In Dictyostelium discoideum (Social amoeba), this protein is UPF0512 protein M.